Consider the following 453-residue polypeptide: Proton extrusion protein PxcA (453 aa).

Positions 147–189 are disordered; it reads SQDKETQTLDNKSTNQTNSKLSNNNKISSGQNDSRLESASQKT. The span at 154 to 163 shows a compositional bias: polar residues; that stretch reads TLDNKSTNQT. Low complexity predominate over residues 164–175; sequence NSKLSNNNKISS. A compositionally biased stretch (polar residues) spans 176–189; sequence GQNDSRLESASQKT. 4 helical membrane-spanning segments follow: residues 235 to 255, 330 to 350, 377 to 397, and 413 to 433; these read FILL…TFLL, SIGN…VIVS, LIIL…WEVI, and FNFL…KYWI.

It belongs to the CemA family.

It is found in the cell inner membrane. In terms of biological role, required for H(+) efflux immediately after light irradiation to form a rapid H(+) concentration gradient across the thylakoid membranes. Together with PxcL, contributes to transient H(+) uptake following dark to light transition. This is Proton extrusion protein PxcA from Crocosphaera subtropica (strain ATCC 51142 / BH68) (Cyanothece sp. (strain ATCC 51142)).